A 352-amino-acid polypeptide reads, in one-letter code: Serine protease 55 (352 aa).

Residues M1–L18 form the signal peptide. In terms of domain architecture, Peptidase S1 spans I68 to Q300. The cysteines at positions 93 and 109 are disulfide-linked. Catalysis depends on charge relay system residues H108 and D156. Cystine bridges form between C189–C256, C222–C235, and C246–C276. N240 carries N-linked (GlcNAc...) asparagine glycosylation. S250 acts as the Charge relay system in catalysis. The disordered stretch occupies residues A308 to P330. Low complexity predominate over residues P319–P330. S325 is lipidated: GPI-anchor amidated serine. Positions G326–Y352 are cleaved as a propeptide — removed in mature form.

It belongs to the peptidase S1 family. As to expression, only detected in testis. Expressed in spermatogonia, spermatocytes, spermatids, Leydig and Sertoli cells. Expressed in prostate cancer and ovarian cancer (at protein level).

It is found in the cell membrane. It localises to the cytoplasm. Its subcellular location is the cytosol. Probable serine protease, which plays a crucial role in the fertility of male mice including sperm migration and sperm-egg interaction. The sequence is that of Serine protease 55 (PRSS55) from Homo sapiens (Human).